The primary structure comprises 617 residues: Chaperone protein HscA homolog (617 aa).

The protein belongs to the heat shock protein 70 family.

Its function is as follows. Chaperone involved in the maturation of iron-sulfur cluster-containing proteins. Has a low intrinsic ATPase activity which is markedly stimulated by HscB. In Actinobacillus pleuropneumoniae serotype 5b (strain L20), this protein is Chaperone protein HscA homolog.